Consider the following 730-residue polypeptide: MNQKYSVTVPELGITFSTGSIAQLANGAVNVQVGETNVFVTACVAQTTKPGQDWFPLTVDYREKYAAAGRFPGGYFKREGRPSEKEILTSRLCDRPCRPLFPEGFLNEVQIIGQLFSADLVNESDISMVNGASAALAISDIPWNGPIAAVRVAEIEGKFVANPTIDQMFASSLDLIYVGNEKDMLMIEGSADQIPEERFIEALAFGHESIQPILKAIKELVAQCGKPKGTFPLVGATPEARTIIERVVPTERLIEAIFGKEKAVRANAVKLLKEEAKAALTAELGEGKFTDVDLNVVFEDLQYKAYRKTVLERGVRADGRGQKDIRPLQAQVGVLPRVHGSAMFQRGDTQNIALTTLGPTKDAQDLDALTGGVKSKSFLLHYNFPPFSVGETGRFTGPGRREIGHGALAERSLVPVLPPEDVFPYSIRVVSEIMASNGSTSMASICGGCLSLMDAGVPIIAPVAGISCGLMTQNASDGSIEKWVTITDILGEEDHFGDMDFKLAGTSKGITGFQLDLKINGLPFEIAKTAIMQARDARMEILKVMLGSLPAPRADLSKYAPRIQTIQIDPEKIGLLIGPGGKTIRRITETTGAQIDIAEDDSGKVFVYSNNAEAMNRAIQEIDSLCGGGGPGGSKGPAIEVGKIYTGRVTGVKEFGCFVECTPGNEGLCHVSELADFRVRRTEDVVKMGDSITVKCIGIDERSGKVRLSRKAAMKELEAQKQSSEAAPAQ.

Mg(2+)-binding residues include D494 and D500. Residues 561 to 622 enclose the KH domain; it reads PRIQTIQIDP…EAMNRAIQEI (62 aa). Positions 642 to 711 constitute an S1 motif domain; that stretch reads GKIYTGRVTG…RSGKVRLSRK (70 aa).

The protein belongs to the polyribonucleotide nucleotidyltransferase family. Requires Mg(2+) as cofactor.

It localises to the cytoplasm. The catalysed reaction is RNA(n+1) + phosphate = RNA(n) + a ribonucleoside 5'-diphosphate. Its function is as follows. Involved in mRNA degradation. Catalyzes the phosphorolysis of single-stranded polyribonucleotides processively in the 3'- to 5'-direction. The protein is Polyribonucleotide nucleotidyltransferase of Opitutus terrae (strain DSM 11246 / JCM 15787 / PB90-1).